Consider the following 128-residue polypeptide: Cholecystokinin B (128 aa).

An N-terminal signal peptide occupies residues 1-20 (MCSGVCICLLLAMLSASSKA). Residues 21–108 (HQATGSLGED…FDQSHRINDR (88 aa)) constitute a propeptide that is removed on maturation. Residues 47-67 (YARASSAGQKKSFQRTDGDQR) form a disordered region. Position 110 is a sulfotyrosine (Tyr110). The residue at position 116 (Phe116) is a Phenylalanine amide. Residues 120 to 128 (SAEEYEYSS) constitute a propeptide that is removed on maturation.

It belongs to the gastrin/cholecystokinin family. The precursor is cleaved by proteases to produce a number of active cholecystokinins. In terms of tissue distribution, brain and gastrointestinal tract.

It is found in the secreted. The protein is Cholecystokinin B (cck-b) of Xenopus laevis (African clawed frog).